The sequence spans 252 residues: Small ribosomal subunit protein uS3 (252 aa).

A KH type-2 domain is found at 39–110; the sequence is IRKALMKELK…EVKINVVEIK (72 aa). The disordered stretch occupies residues 218 to 252; the sequence is TSDEKPKFEKRDFNRSNNNRRDQAPKSHPVAKEAK. Positions 219-252 are enriched in basic and acidic residues; sequence SDEKPKFEKRDFNRSNNNRRDQAPKSHPVAKEAK.

It belongs to the universal ribosomal protein uS3 family. In terms of assembly, part of the 30S ribosomal subunit. Forms a tight complex with proteins S10 and S14.

Functionally, binds the lower part of the 30S subunit head. Binds mRNA in the 70S ribosome, positioning it for translation. In Spiroplasma citri, this protein is Small ribosomal subunit protein uS3.